Reading from the N-terminus, the 314-residue chain is Small ribosomal subunit biogenesis GTPase RsgA (314 aa).

The tract at residues 1–21 (MKRAPTKQPAKPAARGGERAQ) is disordered. In terms of domain architecture, CP-type G spans 85 to 246 (SDQFKSKLFA…LIDSPGFQEF (162 aa)). Residues 134–137 (NKID) and 188–196 (GQSGMGKST) each bind GTP. Cys-270, Cys-275, His-277, and Cys-283 together coordinate Zn(2+).

This sequence belongs to the TRAFAC class YlqF/YawG GTPase family. RsgA subfamily. As to quaternary structure, monomer. Associates with 30S ribosomal subunit, binds 16S rRNA. The cofactor is Zn(2+).

The protein resides in the cytoplasm. One of several proteins that assist in the late maturation steps of the functional core of the 30S ribosomal subunit. Helps release RbfA from mature subunits. May play a role in the assembly of ribosomal proteins into the subunit. Circularly permuted GTPase that catalyzes slow GTP hydrolysis, GTPase activity is stimulated by the 30S ribosomal subunit. This Burkholderia mallei (strain ATCC 23344) protein is Small ribosomal subunit biogenesis GTPase RsgA.